We begin with the raw amino-acid sequence, 134 residues long: Probable histone H2A.3 (134 aa).

Belongs to the histone H2A family. In terms of assembly, the nucleosome is a histone octamer containing two molecules each of H2A, H2B, H3 and H4 assembled in one H3-H4 heterotetramer and two H2A-H2B heterodimers. The octamer wraps approximately 147 bp of DNA.

It is found in the nucleus. The protein resides in the chromosome. Its function is as follows. Core component of nucleosome. Nucleosomes wrap and compact DNA into chromatin, limiting DNA accessibility to the cellular machineries which require DNA as a template. Histones thereby play a central role in transcription regulation, DNA repair, DNA replication and chromosomal stability. DNA accessibility is regulated via a complex set of post-translational modifications of histones, also called histone code, and nucleosome remodeling. This chain is Probable histone H2A.3, found in Oryza sativa subsp. indica (Rice).